The sequence spans 569 residues: GATOR1 complex protein NPRL3 (569 aa).

2 disordered regions span residues 27–60 (PFQR…EQDG) and 416–477 (PSEE…GDSP). 2 stretches are compositionally biased toward polar residues: residues 34–52 (HPAS…SNTG) and 438–468 (SLST…NSSA). The residue at position 476 (serine 476) is a Phosphoserine.

Belongs to the NPR3 family. In terms of assembly, within the GATOR complex, component of the GATOR1 subcomplex, made of DEPDC5, NPRL2 and NPRL3. GATOR1 mediates the strong interaction of the GATOR complex with small GTPases Rag (RagA/RRAGA, RagB/RRAGB, RagC/RRAGC and/or RagD/RRAGD) heterodimers. GATOR1 interacts with GPR155/LYCHOS; interaction takes place in presence of cholesterol and prevents interaction between GATOR1 and KICSTOR. As to expression, widely expressed. Expressed in the frontal lobe cortex as well as in the temporal, parietal, and occipital lobes.

It localises to the lysosome membrane. As a component of the GATOR1 complex functions as an inhibitor of the amino acid-sensing branch of the mTORC1 pathway. In response to amino acid depletion, the GATOR1 complex has GTPase activating protein (GAP) activity and strongly increases GTP hydrolysis by RagA/RRAGA (or RagB/RRAGB) within heterodimeric Rag complexes, thereby turning them into their inactive GDP-bound form, releasing mTORC1 from lysosomal surface and inhibiting mTORC1 signaling. In the presence of abundant amino acids, the GATOR1 complex is negatively regulated by GATOR2, the other GATOR subcomplex, in this amino acid-sensing branch of the TORC1 pathway. In Homo sapiens (Human), this protein is GATOR1 complex protein NPRL3.